Reading from the N-terminus, the 61-residue chain is UPF0434 protein TM1040_0056 (61 aa).

Belongs to the UPF0434 family.

The chain is UPF0434 protein TM1040_0056 from Ruegeria sp. (strain TM1040) (Silicibacter sp.).